The primary structure comprises 40 residues: Antifungal protein ginkbilobin-1 (40 aa).

Residues 3–40 (TAFVSSAHNTQKIPAGAPFNRNLRAMLADLRQNAAFAG) form the Gnk2-homologous domain. Asn-11 is an alpha-D-mannopyranose binding site.

In terms of tissue distribution, expressed in seeds (at the protein level).

Possesses antifungal activity against B.cinerea, M.arachidicola, F.oxysporum, R.solani and C.comatus and moderate antibacterial activity against S.aureus, P.aeruginosa and E.coli. Inhibits HIV-1 reverse transcriptase and proliferation of murine splenocytes. Exerts antifungal activity through its carbohydrate-binding specificity. The polypeptide is Antifungal protein ginkbilobin-1 (Ginkgo biloba (Ginkgo)).